Here is a 326-residue protein sequence, read N- to C-terminus: Methionyl-tRNA formyltransferase (326 aa).

A (6S)-5,6,7,8-tetrahydrofolate-binding site is contributed by 110–113; that stretch reads SLLP. A disordered region spans residues 307-326; that stretch reads VGTRFSPPEAPQREPAPGEA.

Belongs to the Fmt family.

The catalysed reaction is L-methionyl-tRNA(fMet) + (6R)-10-formyltetrahydrofolate = N-formyl-L-methionyl-tRNA(fMet) + (6S)-5,6,7,8-tetrahydrofolate + H(+). Its function is as follows. Attaches a formyl group to the free amino group of methionyl-tRNA(fMet). The formyl group appears to play a dual role in the initiator identity of N-formylmethionyl-tRNA by promoting its recognition by IF2 and preventing the misappropriation of this tRNA by the elongation apparatus. The protein is Methionyl-tRNA formyltransferase of Symbiobacterium thermophilum (strain DSM 24528 / JCM 14929 / IAM 14863 / T).